The sequence spans 76 residues: Exodeoxyribonuclease 7 small subunit (76 aa).

Belongs to the XseB family. As to quaternary structure, heterooligomer composed of large and small subunits.

It is found in the cytoplasm. It carries out the reaction Exonucleolytic cleavage in either 5'- to 3'- or 3'- to 5'-direction to yield nucleoside 5'-phosphates.. Bidirectionally degrades single-stranded DNA into large acid-insoluble oligonucleotides, which are then degraded further into small acid-soluble oligonucleotides. This Staphylococcus aureus (strain Mu3 / ATCC 700698) protein is Exodeoxyribonuclease 7 small subunit.